Reading from the N-terminus, the 462-residue chain is Fumarate hydratase class II (462 aa).

Residues 97–99 (SGT), 127–130 (HPND), 137–139 (SSN), and Thr-185 contribute to the substrate site. The active-site Proton donor/acceptor is His-186. Ser-316 is a catalytic residue. Residues Ser-317 and 322 to 324 (KVN) each bind substrate.

The protein belongs to the class-II fumarase/aspartase family. Fumarase subfamily. In terms of assembly, homotetramer.

The protein localises to the cytoplasm. The catalysed reaction is (S)-malate = fumarate + H2O. Its pathway is carbohydrate metabolism; tricarboxylic acid cycle; (S)-malate from fumarate: step 1/1. Involved in the TCA cycle. Catalyzes the stereospecific interconversion of fumarate to L-malate. This is Fumarate hydratase class II from Halalkalibacterium halodurans (strain ATCC BAA-125 / DSM 18197 / FERM 7344 / JCM 9153 / C-125) (Bacillus halodurans).